The chain runs to 92 residues: Large ribosomal subunit protein eL31 (92 aa).

It belongs to the eukaryotic ribosomal protein eL31 family.

In Pyrobaculum arsenaticum (strain DSM 13514 / JCM 11321 / PZ6), this protein is Large ribosomal subunit protein eL31.